The chain runs to 518 residues: Subtilisin-like serine protease Cla h 9.0101 (518 aa).

Positions 1–16 (MRGALAGLSLATLATA) are cleaved as a signal peptide. A propeptide spans 17 to 138 (SPVLVNSIHN…ERDQEVHVLG (122 aa)) (removed in mature form). Residues 44–136 (YMIKFKDHVT…LVERDQEVHV (93 aa)) enclose the Inhibitor I9 domain. In terms of domain architecture, Peptidase S8 spans 148 to 454 (PWGLARISHR…GGESNYSAIV (307 aa)). Residues D184 and H216 each act as charge relay system in the active site. An igE-binding region spans residues 244–298 (RSNGSGSMSDVVKGVEYAAESHLEQVSITKKGKRKGFKGSTANMSLGGGKSPILD). 2 N-linked (GlcNAc...) asparagine glycosylation sites follow: N246 and N286. The active-site Charge relay system is S382. The N-linked (GlcNAc...) asparagine glycan is linked to N449. A propeptide spans 460-518 (KATHRPTMLEEIESEAKVASKKVYSEGDELAHKVAELTEKVEDLIAGELKDMFRELKRE) (removed in mature form).

This sequence belongs to the peptidase S8 family.

In terms of biological role, serine protease. This chain is Subtilisin-like serine protease Cla h 9.0101, found in Davidiella tassiana (Mycosphaerella tassiana).